The chain runs to 633 residues: Probable methyltransferase PMT17 (633 aa).

Residues 1-18 (MAKENSGHHHQTEARRKK) are Cytoplasmic-facing. The helical; Signal-anchor for type II membrane protein transmembrane segment at 19 to 39 (LTLILGVSGLCILFYVLGAWQ) threads the bilayer. Topologically, residues 40 to 633 (ANTVPSSISK…NNNNNNNNNN (594 aa)) are lumenal. Residues 50 to 71 (LGCETQSNPSSSSSSSSSSESA) are disordered. The span at 59–70 (SSSSSSSSSSES) shows a compositional bias: low complexity. A glycan (N-linked (GlcNAc...) asparagine) is linked at Asn-87.

This sequence belongs to the methyltransferase superfamily.

It is found in the endoplasmic reticulum membrane. The polypeptide is Probable methyltransferase PMT17 (Arabidopsis thaliana (Mouse-ear cress)).